The following is a 497-amino-acid chain: Angiopoietin-1 (497 aa).

Residues 1 to 19 (MTVFLSFAFLAAILTHIGC) form the signal peptide. N-linked (GlcNAc...) asparagine glycans are attached at residues asparagine 92, asparagine 122, asparagine 154, asparagine 243, and asparagine 294. Residues 158 to 256 (RLEIQLLENS…LQKQQLELMD (99 aa)) are a coiled coil. In terms of domain architecture, Fibrinogen C-terminal spans 276–496 (KEEEKPFRDC…STTMMIRPLD (221 aa)). 2 disulfides stabilise this stretch: cysteine 285-cysteine 314 and cysteine 438-cysteine 451.

Homooligomer. Interacts with TEK/TIE2. Interacts with SVEP1/polydom. Interacts with THBD; this interaction significantly inhibits the generation of activated PC and TAFIa/CPB2 by the thrombin/thrombomodulin complex.

It is found in the secreted. Its function is as follows. Binds and activates TIE2 receptor by inducing its tyrosine phosphorylation. Implicated in endothelial developmental processes later and distinct from that of VEGF. Appears to play a crucial role in mediating reciprocal interactions between the endothelium and surrounding matrix and mesenchyme. Mediates blood vessel maturation/stability. It may play an important role in the heart early development. In Canis lupus familiaris (Dog), this protein is Angiopoietin-1 (ANGPT1).